The chain runs to 435 residues: Hydrogenobyrinate a,c-diamide synthase (435 aa).

Residues 239-422 (RIGVARDASF…IHFYLPSNPQ (184 aa)) enclose the GATase cobBQ-type domain. The Nucleophile role is filled by Cys321.

Belongs to the CobB/CbiA family. It depends on Mg(2+) as a cofactor.

The catalysed reaction is hydrogenobyrinate + 2 L-glutamine + 2 ATP + 2 H2O = hydrogenobyrinate a,c-diamide + 2 L-glutamate + 2 ADP + 2 phosphate + 2 H(+). It participates in cofactor biosynthesis; adenosylcobalamin biosynthesis; cob(II)yrinate a,c-diamide from precorrin-2 (aerobic route): step 9/10. Catalyzes the ATP-dependent amidation of the two carboxylate groups at positions a and c of hydrogenobyrinate, using either L-glutamine or ammonia as the nitrogen source. The protein is Hydrogenobyrinate a,c-diamide synthase of Pseudomonas aeruginosa (strain ATCC 15692 / DSM 22644 / CIP 104116 / JCM 14847 / LMG 12228 / 1C / PRS 101 / PAO1).